Reading from the N-terminus, the 216-residue chain is Cytochrome c oxidase assembly protein CtaG (216 aa).

Over residues 1–23 (MTDAPQHPQQPATGTPATPKAAP) the composition is skewed to low complexity. Residues 1 to 24 (MTDAPQHPQQPATGTPATPKAAPR) are disordered. The Cytoplasmic segment spans residues 1-26 (MTDAPQHPQQPATGTPATPKAAPRVG). A helical; Signal-anchor for type II membrane protein transmembrane segment spans residues 27–49 (RDVRIGATCGLLVALMVGAAYAA). Residues 50–216 (VPFYNWFCRA…SEPDRPGGSI (167 aa)) lie on the Periplasmic side of the membrane.

It belongs to the COX11/CtaG family.

The protein resides in the cell inner membrane. Functionally, exerts its effect at some terminal stage of cytochrome c oxidase synthesis, probably by being involved in the insertion of the copper B into subunit I. This chain is Cytochrome c oxidase assembly protein CtaG, found in Nitrobacter hamburgensis (strain DSM 10229 / NCIMB 13809 / X14).